The sequence spans 227 residues: UPF0441 protein YPO0661/y3517/YP_2976 (227 aa).

Positions 198 to 227 (GGFGESVAKQSSMQRSAATSSKTTTRSMGG) are disordered. The segment covering 212 to 227 (RSAATSSKTTTRSMGG) has biased composition (low complexity).

This sequence belongs to the UPF0441 family.

The sequence is that of UPF0441 protein YPO0661/y3517/YP_2976 from Yersinia pestis.